The chain runs to 119 residues: Large ribosomal subunit protein bL20 (119 aa).

Belongs to the bacterial ribosomal protein bL20 family.

In terms of biological role, binds directly to 23S ribosomal RNA and is necessary for the in vitro assembly process of the 50S ribosomal subunit. It is not involved in the protein synthesizing functions of that subunit. The sequence is that of Large ribosomal subunit protein bL20 from Bordetella bronchiseptica (strain ATCC BAA-588 / NCTC 13252 / RB50) (Alcaligenes bronchisepticus).